Consider the following 136-residue polypeptide: Ribosome-binding factor A (136 aa).

This sequence belongs to the RbfA family. In terms of assembly, monomer. Binds 30S ribosomal subunits, but not 50S ribosomal subunits or 70S ribosomes.

The protein resides in the cytoplasm. In terms of biological role, one of several proteins that assist in the late maturation steps of the functional core of the 30S ribosomal subunit. Associates with free 30S ribosomal subunits (but not with 30S subunits that are part of 70S ribosomes or polysomes). Required for efficient processing of 16S rRNA. May interact with the 5'-terminal helix region of 16S rRNA. The chain is Ribosome-binding factor A from Photorhabdus laumondii subsp. laumondii (strain DSM 15139 / CIP 105565 / TT01) (Photorhabdus luminescens subsp. laumondii).